Reading from the N-terminus, the 414-residue chain is Serine hydroxymethyltransferase (414 aa).

(6S)-5,6,7,8-tetrahydrofolate-binding positions include Leu121 and 125 to 127 (GHL). Lys229 bears the N6-(pyridoxal phosphate)lysine mark.

Belongs to the SHMT family. In terms of assembly, homodimer. Pyridoxal 5'-phosphate serves as cofactor.

It is found in the cytoplasm. The enzyme catalyses (6R)-5,10-methylene-5,6,7,8-tetrahydrofolate + glycine + H2O = (6S)-5,6,7,8-tetrahydrofolate + L-serine. It functions in the pathway one-carbon metabolism; tetrahydrofolate interconversion. Its pathway is amino-acid biosynthesis; glycine biosynthesis; glycine from L-serine: step 1/1. In terms of biological role, catalyzes the reversible interconversion of serine and glycine with tetrahydrofolate (THF) serving as the one-carbon carrier. This reaction serves as the major source of one-carbon groups required for the biosynthesis of purines, thymidylate, methionine, and other important biomolecules. Also exhibits THF-independent aldolase activity toward beta-hydroxyamino acids, producing glycine and aldehydes, via a retro-aldol mechanism. The polypeptide is Serine hydroxymethyltransferase (Albidiferax ferrireducens (strain ATCC BAA-621 / DSM 15236 / T118) (Rhodoferax ferrireducens)).